Here is a 53-residue protein sequence, read N- to C-terminus: Conotoxin Cal6.27 (53 aa).

Positions Met1–Ala24 are cleaved as a signal peptide. Disulfide bonds link Cys29-Cys43, Cys36-Cys47, and Cys42-Cys51.

The protein belongs to the conotoxin O1 superfamily. Expressed by the venom duct.

The protein resides in the secreted. Its function is as follows. Probable neurotoxin. In Californiconus californicus (California cone), this protein is Conotoxin Cal6.27.